Reading from the N-terminus, the 217-residue chain is Somatotropin (217 aa).

Positions 1–26 (MMAAGPRTSLLLAFALLCLPWTQVVG) are cleaved as a signal peptide. His-46 is a binding site for Zn(2+). An intrachain disulfide couples Cys-79 to Cys-190. Residue Ser-132 is modified to Phosphoserine. Residue Glu-199 participates in Zn(2+) binding. An intrachain disulfide couples Cys-207 to Cys-215.

The protein belongs to the somatotropin/prolactin family.

Its subcellular location is the secreted. Plays an important role in growth control. Its major role in stimulating body growth is to stimulate the liver and other tissues to secrete IGF1. It stimulates both the differentiation and proliferation of myoblasts. It also stimulates amino acid uptake and protein synthesis in muscle and other tissues. In Bos mutus grunniens (Wild yak), this protein is Somatotropin (GH1).